A 599-amino-acid polypeptide reads, in one-letter code: Beta-(1--&gt;2)glucan export ATP-binding/permease protein NdvA (599 aa).

Positions Thr-21–Thr-301 constitute an ABC transmembrane type-1 domain. Helical transmembrane passes span Ile-22–Phe-42, Ile-55–Phe-75, Met-156–Val-176, Met-248–Gly-268, and Ile-276–Ile-296. The ABC transporter domain maps to Ile-335–Ala-569. Gly-368–Thr-375 is an ATP binding site.

Belongs to the ABC transporter superfamily. Beta-(1--&gt;2)glucan exporter (TC 3.A.1.108.1) family. As to quaternary structure, homodimer.

Its subcellular location is the cell inner membrane. The enzyme catalyses [(1-&gt;2)-beta-D-glucosyl](n)(in) + ATP + H2O = [(1-&gt;2)-beta-D-glucosyl](n)(out) + ADP + phosphate + H(+). Its function is as follows. Involved in beta-(1--&gt;2)glucan export. Transmembrane domains (TMD) form a pore in the inner membrane and the ATP-binding domain (NBD) is responsible for energy generation. The protein is Beta-(1--&gt;2)glucan export ATP-binding/permease protein NdvA of Brucella suis biovar 1 (strain 1330).